Consider the following 311-residue polypeptide: Transcription initiation factor IIB (311 aa).

The TFIIB-type zinc finger occupies lysine 11–aspartate 42. Residues cysteine 15, cysteine 18, cysteine 34, and cysteine 37 each coordinate Zn(2+). 2 repeat units span residues serine 128 to leucine 211 and aspartate 222 to glutamate 303.

This sequence belongs to the TFIIB family.

Its function is as follows. Stabilizes TBP binding to an archaeal box-A promoter. Also responsible for recruiting RNA polymerase II to the pre-initiation complex (DNA-TBP-TFIIB). This Methanosphaera stadtmanae (strain ATCC 43021 / DSM 3091 / JCM 11832 / MCB-3) protein is Transcription initiation factor IIB.